Here is a 746-residue protein sequence, read N- to C-terminus: Bud site selection protein 7 (746 aa).

The CHS5-binding stretch occupies residues 733–746 (LNFFTTCTIGCYDA).

It belongs to the CHAPS family. As to quaternary structure, component of the CHS5/6 complex composed of the 4 CHAPS proteins BCH1, BCH2v, BUD7, and CHS6 as well as at least CHS5 and GTP-bound ARF1. The complex interacts with the cargo protein CHS3.

It localises to the golgi apparatus. Its subcellular location is the trans-Golgi network membrane. In terms of biological role, member of the CHS5-ARF1P-binding proteins (CHAPS) which mediates export of specific cargo proteins, including chitin synthase CHS3. May be involved in positioning the proximal bud pole signal. In Saccharomyces cerevisiae (strain ATCC 204508 / S288c) (Baker's yeast), this protein is Bud site selection protein 7 (BUD7).